Here is a 278-residue protein sequence, read N- to C-terminus: Transmembrane protein 45B (278 aa).

The next 7 helical transmembrane spans lie at 7–27 (HALPGSFFLIFGLWWSVKYPL), 49–69 (IIEGAVKALFAVIGILAEQFV), 95–115 (YLFFGVSGIIDMLTYLYFNIV), 117–137 (LGLDRVVLAMAVFVEGFLFYF), 149–169 (IHSLLLFSLFGATISICLEVI), 183–203 (LLILQGTWFWQIGFVLFPPFG), and 215–235 (VMFITMCFCWHYLVALCITAI). Phosphoserine occurs at positions 273 and 275.

It belongs to the TMEM45 family.

The protein resides in the endosome membrane. It is found in the lysosome membrane. Its subcellular location is the golgi apparatus. The protein localises to the trans-Golgi network membrane. Functionally, plays a role in innate immunity. This chain is Transmembrane protein 45B (Tmem45b), found in Rattus norvegicus (Rat).